A 679-amino-acid chain; its full sequence is Methionine--tRNA ligase (679 aa).

A 'HIGH' region motif is present at residues 14-24 (PYANGSIHLGH). C145, C148, C158, and C161 together coordinate Zn(2+). Positions 331–335 (KMSKS) match the 'KMSKS' region motif. K334 lines the ATP pocket. Positions 577–679 (TFAAVDLRVA…SGAKPGQRIK (103 aa)) constitute a tRNA-binding domain.

It belongs to the class-I aminoacyl-tRNA synthetase family. MetG type 1 subfamily. In terms of assembly, homodimer. Zn(2+) serves as cofactor.

The protein localises to the cytoplasm. It carries out the reaction tRNA(Met) + L-methionine + ATP = L-methionyl-tRNA(Met) + AMP + diphosphate. Functionally, is required not only for elongation of protein synthesis but also for the initiation of all mRNA translation through initiator tRNA(fMet) aminoacylation. This Pseudomonas putida (strain ATCC 700007 / DSM 6899 / JCM 31910 / BCRC 17059 / LMG 24140 / F1) protein is Methionine--tRNA ligase.